The following is a 205-amino-acid chain: 2-dehydro-3-deoxy-6-phosphogalactonate aldolase (205 aa).

Position 14 (R14) interacts with 2-dehydro-3-deoxy-6-phospho-D-galactonate. The active-site Proton donor/acceptor is E37. 2-dehydro-3-deoxy-6-phospho-D-galactonate-binding residues include T66, K126, G156, G176, and S177. K126 functions as the Schiff-base intermediate with substrate in the catalytic mechanism.

It belongs to the KHG/KDPG aldolase family. In terms of assembly, homotrimer.

It catalyses the reaction 2-dehydro-3-deoxy-6-phospho-D-galactonate = D-glyceraldehyde 3-phosphate + pyruvate. It participates in carbohydrate acid metabolism; D-galactonate degradation; D-glyceraldehyde 3-phosphate and pyruvate from D-galactonate: step 3/3. Functionally, involved in the degradation of galactose via the DeLey-Doudoroff pathway. Catalyzes the reversible, stereospecific retro-aldol cleavage of 2-keto-3-deoxy-6-phosphogalactonate (KDPGal) to pyruvate and D-glyceraldehyde-3-phosphate. In the synthetic direction, it catalyzes the addition of pyruvate to electrophilic aldehydes with re-facial selectivity. It can use a limited number of aldehyde substrates, including D-glyceraldehyde-3-phosphate (natural substrate), D-glyceraldehyde, glycolaldehyde, 2-pyridinecarboxaldehyde, D-ribose, D-erythrose and D-threose. It efficiently catalyzes aldol addition only using pyruvate as the nucleophilic component and accepts both stereochemical configurations at C2 of the electrophile. The chain is 2-dehydro-3-deoxy-6-phosphogalactonate aldolase (dgoA) from Escherichia coli (strain K12).